The following is a 96-amino-acid chain: Co-chaperonin GroES (96 aa).

The protein belongs to the GroES chaperonin family. As to quaternary structure, heptamer of 7 subunits arranged in a ring. Interacts with the chaperonin GroEL.

The protein resides in the cytoplasm. Functionally, together with the chaperonin GroEL, plays an essential role in assisting protein folding. The GroEL-GroES system forms a nano-cage that allows encapsulation of the non-native substrate proteins and provides a physical environment optimized to promote and accelerate protein folding. GroES binds to the apical surface of the GroEL ring, thereby capping the opening of the GroEL channel. This Shewanella sediminis (strain HAW-EB3) protein is Co-chaperonin GroES.